Consider the following 216-residue polypeptide: Probable nicotinate-nucleotide adenylyltransferase (216 aa).

It belongs to the NadD family.

The enzyme catalyses nicotinate beta-D-ribonucleotide + ATP + H(+) = deamido-NAD(+) + diphosphate. Its pathway is cofactor biosynthesis; NAD(+) biosynthesis; deamido-NAD(+) from nicotinate D-ribonucleotide: step 1/1. Catalyzes the reversible adenylation of nicotinate mononucleotide (NaMN) to nicotinic acid adenine dinucleotide (NaAD). This is Probable nicotinate-nucleotide adenylyltransferase from Geobacillus thermodenitrificans (strain NG80-2).